The primary structure comprises 159 residues: Protein HydD (159 aa).

It belongs to the peptidase A31 family.

This is Protein HydD (hydD) from Wolinella succinogenes (strain ATCC 29543 / DSM 1740 / CCUG 13145 / JCM 31913 / LMG 7466 / NCTC 11488 / FDC 602W) (Vibrio succinogenes).